The primary structure comprises 363 residues: Chorismate synthase (363 aa).

R48 contributes to the NADP(+) binding site. FMN-binding positions include 125 to 127 (RSS), 238 to 239 (NA), G278, 293 to 297 (KPTAS), and R319.

Belongs to the chorismate synthase family. Homotetramer. The cofactor is FMNH2.

It carries out the reaction 5-O-(1-carboxyvinyl)-3-phosphoshikimate = chorismate + phosphate. The protein operates within metabolic intermediate biosynthesis; chorismate biosynthesis; chorismate from D-erythrose 4-phosphate and phosphoenolpyruvate: step 7/7. In terms of biological role, catalyzes the anti-1,4-elimination of the C-3 phosphate and the C-6 proR hydrogen from 5-enolpyruvylshikimate-3-phosphate (EPSP) to yield chorismate, which is the branch point compound that serves as the starting substrate for the three terminal pathways of aromatic amino acid biosynthesis. This reaction introduces a second double bond into the aromatic ring system. In Acinetobacter baumannii (strain ACICU), this protein is Chorismate synthase.